Here is a 360-residue protein sequence, read N- to C-terminus: NAD(P)H-quinone oxidoreductase subunit 1, chloroplastic (360 aa).

The next 9 helical transmembrane spans lie at isoleucine 27–isoleucine 47, phenylalanine 98–phenylalanine 118, isoleucine 129–glycine 149, alanine 165–leucine 185, phenylalanine 203–leucine 223, tyrosine 248–serine 268, leucine 269–leucine 289, isoleucine 297–isoleucine 317, and phenylalanine 340–leucine 360.

The protein belongs to the complex I subunit 1 family. As to quaternary structure, NDH is composed of at least 16 different subunits, 5 of which are encoded in the nucleus.

The protein localises to the plastid. Its subcellular location is the chloroplast thylakoid membrane. The enzyme catalyses a plastoquinone + NADH + (n+1) H(+)(in) = a plastoquinol + NAD(+) + n H(+)(out). The catalysed reaction is a plastoquinone + NADPH + (n+1) H(+)(in) = a plastoquinol + NADP(+) + n H(+)(out). In terms of biological role, NDH shuttles electrons from NAD(P)H:plastoquinone, via FMN and iron-sulfur (Fe-S) centers, to quinones in the photosynthetic chain and possibly in a chloroplast respiratory chain. The immediate electron acceptor for the enzyme in this species is believed to be plastoquinone. Couples the redox reaction to proton translocation, and thus conserves the redox energy in a proton gradient. This Nasturtium officinale (Watercress) protein is NAD(P)H-quinone oxidoreductase subunit 1, chloroplastic.